The following is a 208-amino-acid chain: FMN-dependent NADH:quinone oxidoreductase (208 aa).

FMN contacts are provided by residues serine 9 and 15-17; that span reads SHS.

This sequence belongs to the azoreductase type 1 family. As to quaternary structure, homodimer. It depends on FMN as a cofactor.

The catalysed reaction is 2 a quinone + NADH + H(+) = 2 a 1,4-benzosemiquinone + NAD(+). The enzyme catalyses N,N-dimethyl-1,4-phenylenediamine + anthranilate + 2 NAD(+) = 2-(4-dimethylaminophenyl)diazenylbenzoate + 2 NADH + 2 H(+). In terms of biological role, quinone reductase that provides resistance to thiol-specific stress caused by electrophilic quinones. Functionally, also exhibits azoreductase activity. Catalyzes the reductive cleavage of the azo bond in aromatic azo compounds to the corresponding amines. This chain is FMN-dependent NADH:quinone oxidoreductase, found in Bordetella petrii (strain ATCC BAA-461 / DSM 12804 / CCUG 43448).